Consider the following 451-residue polypeptide: Probable beta-1,4-xylosyltransferase GT43E (451 aa).

Residues 1-88 lie on the Cytoplasmic side of the membrane; it reads MVSSRRNTGG…SKSRGLSCKR (88 aa). The chain crosses the membrane as a helical; Signal-anchor for type II membrane protein span at residues 89–109; the sequence is LAFHLFVCFMVGIFIGFMPFF. At 110-451 the chain is on the lumenal side; sequence SVDVSQKIVS…KNLDAVIPVT (342 aa). 2 N-linked (GlcNAc...) asparagine glycosylation sites follow: asparagine 260 and asparagine 366.

Belongs to the glycosyltransferase 43 family.

Its subcellular location is the golgi apparatus membrane. In terms of biological role, probable beta-1,4-xylosyltransferase involved in xylan biosynthesis in cell walls. This is Probable beta-1,4-xylosyltransferase GT43E from Oryza sativa subsp. japonica (Rice).